Here is a 494-residue protein sequence, read N- to C-terminus: DDB1- and CUL4-associated factor 4 (494 aa).

The disordered stretch occupies residues 1 to 65 (MHQSSWKSRR…AGSSSVPDLP (65 aa)). A compositionally biased stretch (basic residues) spans 7–20 (KSRRHRRRGHRHSA). Over residues 51 to 60 (STSSTAGSSS) the composition is skewed to low complexity. 2 WD repeats span residues 367 to 406 (FHDS…CIRQ) and 409 to 450 (GHVN…LLRT).

In terms of assembly, interacts with DDB1 and CUL4A.

The protein operates within protein modification; protein ubiquitination. In terms of biological role, may function as a substrate receptor for CUL4-DDB1 E3 ubiquitin-protein ligase complex. The protein is DDB1- and CUL4-associated factor 4 (DCAF4) of Bos taurus (Bovine).